Here is a 35-residue protein sequence, read N- to C-terminus: uncharacterized protein (35 aa).

A helical transmembrane segment spans residues 14-34; that stretch reads LAHLIGIIYLIIILGTLVMLF.

It is found in the endoplasmic reticulum membrane. This is an uncharacterized protein from Saccharomyces cerevisiae (strain ATCC 204508 / S288c) (Baker's yeast).